A 134-amino-acid chain; its full sequence is uncharacterized protein (134 aa).

The disordered stretch occupies residues methionine 1–glutamate 30. The span at arginine 10–glutamate 30 shows a compositional bias: basic and acidic residues.

This is an uncharacterized protein from Homo sapiens (Human).